The primary structure comprises 317 residues: Protoheme IX farnesyltransferase (317 aa).

Transmembrane regions (helical) follow at residues Leu-29–Val-49, Leu-53–Cys-73, Val-102–Leu-122, Leu-123–Leu-143, Ile-151–Gly-171, Val-179–Ile-199, Ile-224–Pro-241, Val-245–Leu-267, and Phe-283–Pro-303.

It belongs to the UbiA prenyltransferase family. Protoheme IX farnesyltransferase subfamily.

It is found in the cell inner membrane. The enzyme catalyses heme b + (2E,6E)-farnesyl diphosphate + H2O = Fe(II)-heme o + diphosphate. It participates in porphyrin-containing compound metabolism; heme O biosynthesis; heme O from protoheme: step 1/1. In terms of biological role, converts heme B (protoheme IX) to heme O by substitution of the vinyl group on carbon 2 of heme B porphyrin ring with a hydroxyethyl farnesyl side group. The protein is Protoheme IX farnesyltransferase of Thermosynechococcus vestitus (strain NIES-2133 / IAM M-273 / BP-1).